Consider the following 601-residue polypeptide: ATP-dependent RNA helicase DeaD (601 aa).

Positions 6–34 (STFSFLGLNPFIIKSLSKMGYVKPSPIQA) match the Q motif motif. Residues 37–208 (IPLLLEGRDV…KRFMKNPQEI (172 aa)) form the Helicase ATP-binding domain. 50–57 (AQTGSGKT) is a binding site for ATP. A DEAD box motif is present at residues 156–159 (DEAD). The Helicase C-terminal domain maps to 231–378 (KTDALIRFLE…EVQLPKIEVL (148 aa)). The segment covering 564 to 581 (SIFNKDKNNKRRFSDNRL) has biased composition (basic and acidic residues). Residues 564–601 (SIFNKDKNNKRRFSDNRLNKSSSIKNETKSSFFRRKSV) form a disordered region. The span at 582 to 594 (NKSSSIKNETKSS) shows a compositional bias: polar residues.

The protein belongs to the DEAD box helicase family. DeaD/CsdA subfamily.

Its subcellular location is the cytoplasm. The enzyme catalyses ATP + H2O = ADP + phosphate + H(+). Functionally, DEAD-box RNA helicase involved in various cellular processes at low temperature, including ribosome biogenesis, mRNA degradation and translation initiation. This is ATP-dependent RNA helicase DeaD from Buchnera aphidicola subsp. Schizaphis graminum (strain Sg).